A 260-amino-acid polypeptide reads, in one-letter code: 3-methyl-2-oxobutanoate hydroxymethyltransferase (260 aa).

Residues D42 and D81 each coordinate Mg(2+). 3-methyl-2-oxobutanoate contacts are provided by residues 42–43, D81, and K109; that span reads DS. E111 provides a ligand contact to Mg(2+). E178 (proton acceptor) is an active-site residue.

Belongs to the PanB family. As to quaternary structure, homodecamer; pentamer of dimers. It depends on Mg(2+) as a cofactor.

Its subcellular location is the cytoplasm. The catalysed reaction is 3-methyl-2-oxobutanoate + (6R)-5,10-methylene-5,6,7,8-tetrahydrofolate + H2O = 2-dehydropantoate + (6S)-5,6,7,8-tetrahydrofolate. It functions in the pathway cofactor biosynthesis; (R)-pantothenate biosynthesis; (R)-pantoate from 3-methyl-2-oxobutanoate: step 1/2. In terms of biological role, catalyzes the reversible reaction in which hydroxymethyl group from 5,10-methylenetetrahydrofolate is transferred onto alpha-ketoisovalerate to form ketopantoate. In Ruthia magnifica subsp. Calyptogena magnifica, this protein is 3-methyl-2-oxobutanoate hydroxymethyltransferase.